A 299-amino-acid chain; its full sequence is Ribosomal protein L11 methyltransferase (299 aa).

S-adenosyl-L-methionine is bound by residues Thr140, Gly161, Asp183, and Asn232.

This sequence belongs to the methyltransferase superfamily. PrmA family.

The protein resides in the cytoplasm. The catalysed reaction is L-lysyl-[protein] + 3 S-adenosyl-L-methionine = N(6),N(6),N(6)-trimethyl-L-lysyl-[protein] + 3 S-adenosyl-L-homocysteine + 3 H(+). Methylates ribosomal protein L11. This chain is Ribosomal protein L11 methyltransferase, found in Synechococcus elongatus (strain ATCC 33912 / PCC 7942 / FACHB-805) (Anacystis nidulans R2).